Here is a 303-residue protein sequence, read N- to C-terminus: D-alanine--D-alanine ligase B (303 aa).

Residues 103 to 298 (KLLWKGAGLP…YEDLCLKVLD (196 aa)) enclose the ATP-grasp domain. ATP is bound at residue 129–184 (ERQLGLPIFVKPSTEGSSIGVTKVKQPGELRAAFEEARKYDKVVIAEQFIGGGEYT). 3 residues coordinate Mg(2+): Asp252, Glu265, and Asn267.

Belongs to the D-alanine--D-alanine ligase family. It depends on Mg(2+) as a cofactor. Requires Mn(2+) as cofactor.

It localises to the cytoplasm. The catalysed reaction is 2 D-alanine + ATP = D-alanyl-D-alanine + ADP + phosphate + H(+). It participates in cell wall biogenesis; peptidoglycan biosynthesis. In terms of biological role, cell wall formation. This Chromobacterium violaceum (strain ATCC 12472 / DSM 30191 / JCM 1249 / CCUG 213 / NBRC 12614 / NCIMB 9131 / NCTC 9757 / MK) protein is D-alanine--D-alanine ligase B.